The sequence spans 410 residues: Peptidase T (410 aa).

Histidine 79 provides a ligand contact to Zn(2+). Aspartate 81 is a catalytic residue. Residue aspartate 142 participates in Zn(2+) binding. The active-site Proton acceptor is the glutamate 176. Positions 177, 199, and 381 each coordinate Zn(2+).

Belongs to the peptidase M20B family. Zn(2+) is required as a cofactor.

Its subcellular location is the cytoplasm. The catalysed reaction is Release of the N-terminal residue from a tripeptide.. Functionally, cleaves the N-terminal amino acid of tripeptides. This chain is Peptidase T, found in Listeria innocua serovar 6a (strain ATCC BAA-680 / CLIP 11262).